Here is a 750-residue protein sequence, read N- to C-terminus: Photosystem I P700 chlorophyll a apoprotein A1 (750 aa).

The next 8 helical transmembrane spans lie at 70 to 93, 156 to 179, 195 to 219, 291 to 309, 346 to 369, 385 to 411, 433 to 455, and 531 to 549; these read VFSA…FHGA, LYCT…FHYH, LNHH…HVSL, IAHH…GHMY, WHAQ…HHMY, LSLF…IFMV, AIIS…LYIH, and FLVH…LILL. Residues Cys573 and Cys582 each coordinate [4Fe-4S] cluster. A run of 2 helical transmembrane segments spans residues 589-610 and 664-686; these read HVFL…HFSW and LSAY…MFLF. His675 contributes to the chlorophyll a' binding site. Chlorophyll a-binding residues include Met683 and Tyr691. Trp692 serves as a coordination point for phylloquinone. Residues 724–744 traverse the membrane as a helical segment; it reads AVGVTHYLLGGIATTWAFFLA.

This sequence belongs to the PsaA/PsaB family. In terms of assembly, the PsaA/B heterodimer binds the P700 chlorophyll special pair and subsequent electron acceptors. PSI consists of a core antenna complex that captures photons, and an electron transfer chain that converts photonic excitation into a charge separation. The eukaryotic PSI reaction center is composed of at least 11 subunits. Requires P700 is a chlorophyll a/chlorophyll a' dimer, A0 is one or more chlorophyll a, A1 is one or both phylloquinones and FX is a shared 4Fe-4S iron-sulfur center. as cofactor.

The protein localises to the plastid. It localises to the chloroplast thylakoid membrane. The enzyme catalyses reduced [plastocyanin] + hnu + oxidized [2Fe-2S]-[ferredoxin] = oxidized [plastocyanin] + reduced [2Fe-2S]-[ferredoxin]. Its function is as follows. PsaA and PsaB bind P700, the primary electron donor of photosystem I (PSI), as well as the electron acceptors A0, A1 and FX. PSI is a plastocyanin-ferredoxin oxidoreductase, converting photonic excitation into a charge separation, which transfers an electron from the donor P700 chlorophyll pair to the spectroscopically characterized acceptors A0, A1, FX, FA and FB in turn. Oxidized P700 is reduced on the lumenal side of the thylakoid membrane by plastocyanin. The polypeptide is Photosystem I P700 chlorophyll a apoprotein A1 (Drimys granadensis).